A 108-amino-acid chain; its full sequence is LBH domain-containing protein 2 (108 aa).

Over residues 1–11 the composition is skewed to pro residues; that stretch reads MSTPRPAPPQP. The disordered stretch occupies residues 1–108; that stretch reads MSTPRPAPPQ…SEDPAAPARG (108 aa). One can recognise an LBH domain in the interval 37 to 62; that stretch reads QRLPSIVVEPSEADPVESGELRWPLE. A compositionally biased stretch (low complexity) spans 63 to 85; that stretch reads SAQRGPSQSRAAAAPSPSLPGEP.

The protein is LBH domain-containing protein 2 of Homo sapiens (Human).